The chain runs to 387 residues: Alkanesulfonate monooxygenase (387 aa).

The protein belongs to the SsuD family.

The enzyme catalyses an alkanesulfonate + FMNH2 + O2 = an aldehyde + FMN + sulfite + H2O + 2 H(+). Functionally, catalyzes the desulfonation of aliphatic sulfonates. This chain is Alkanesulfonate monooxygenase, found in Ralstonia pickettii (strain 12J).